The following is a 972-amino-acid chain: Cycloisomaltooligosaccharide glucanotransferase (972 aa).

The signal sequence occupies residues 1–38 (MVRFMYALRKRRLSLLLAMSLLVMCVASVVSPPPQALA). 2 CBM6 domains span residues 421 to 546 (TRYE…LTLG) and 748 to 871 (DIYE…LDLD).

The protein belongs to the glycosyl hydrolase 66 family. As to quaternary structure, monomer.

It catalyses the reaction cyclizes part of a (1-&gt;6)-alpha-D-glucan chain by formation of a (1-&gt;6)-alpha-D-glucosidic bond.. Functionally, produces cycloisomaltooligosaccharide from dextran containing 7, 8 or 9 glucose units. The enzyme is specific for (1-&gt;6)-alpha-D-glucans (dextrans) and, without activity toward (1-&gt;4)-alpha-D-glucans, such as amylose. It also has no activity on oligosaccharides, such as amylopectin and pullulan, containing (1-&gt;6)-alpha-D-glucosidic linkages at branch points. The sequence is that of Cycloisomaltooligosaccharide glucanotransferase from Niallia circulans (Bacillus circulans).